We begin with the raw amino-acid sequence, 468 residues long: UDP-N-acetylmuramate--L-alanine ligase (468 aa).

112–118 (GTHGKTT) serves as a coordination point for ATP.

This sequence belongs to the MurCDEF family.

Its subcellular location is the cytoplasm. The enzyme catalyses UDP-N-acetyl-alpha-D-muramate + L-alanine + ATP = UDP-N-acetyl-alpha-D-muramoyl-L-alanine + ADP + phosphate + H(+). It functions in the pathway cell wall biogenesis; peptidoglycan biosynthesis. Functionally, cell wall formation. This is UDP-N-acetylmuramate--L-alanine ligase from Bordetella petrii (strain ATCC BAA-461 / DSM 12804 / CCUG 43448).